Reading from the N-terminus, the 305-residue chain is Homoserine O-acetyltransferase (305 aa).

Cys-142 (acyl-thioester intermediate) is an active-site residue. 2 residues coordinate substrate: Lys-163 and Ser-192. The active-site Proton acceptor is His-235. Residue Glu-237 is part of the active site. Residue Arg-249 coordinates substrate.

It belongs to the MetA family.

The protein resides in the cytoplasm. The enzyme catalyses L-homoserine + acetyl-CoA = O-acetyl-L-homoserine + CoA. Its pathway is amino-acid biosynthesis; L-methionine biosynthesis via de novo pathway; O-acetyl-L-homoserine from L-homoserine: step 1/1. Transfers an acetyl group from acetyl-CoA to L-homoserine, forming acetyl-L-homoserine. This Bacteroides fragilis (strain ATCC 25285 / DSM 2151 / CCUG 4856 / JCM 11019 / LMG 10263 / NCTC 9343 / Onslow / VPI 2553 / EN-2) protein is Homoserine O-acetyltransferase.